Reading from the N-terminus, the 115-residue chain is MSLDPAIAARLKRNADGLFAAVTQERGTGKVLMVAWMDDDALARTLQTREATYFSRSRGEQWVKGATSGHTQKVHSVRLDCDGDTVLLEVDQVGGACHTGDHTCFDADLLLGPDE.

A Mg(2+)-binding site is contributed by aspartate 80. Cysteine 81 contributes to the Zn(2+) binding site. The Mg(2+) site is built by aspartate 82 and aspartate 84. Residues cysteine 97 and cysteine 104 each contribute to the Zn(2+) site.

Belongs to the PRA-CH family. Homodimer. Mg(2+) is required as a cofactor. Requires Zn(2+) as cofactor.

It localises to the cytoplasm. It catalyses the reaction 1-(5-phospho-beta-D-ribosyl)-5'-AMP + H2O = 1-(5-phospho-beta-D-ribosyl)-5-[(5-phospho-beta-D-ribosylamino)methylideneamino]imidazole-4-carboxamide. It functions in the pathway amino-acid biosynthesis; L-histidine biosynthesis; L-histidine from 5-phospho-alpha-D-ribose 1-diphosphate: step 3/9. Functionally, catalyzes the hydrolysis of the adenine ring of phosphoribosyl-AMP. This is Phosphoribosyl-AMP cyclohydrolase from Mycolicibacterium smegmatis (strain ATCC 700084 / mc(2)155) (Mycobacterium smegmatis).